A 324-amino-acid chain; its full sequence is 6-methylsalicylic acid decarboxylase (324 aa).

Residues His7, His9, His157, and Asp274 each contribute to the Zn(2+) site.

Belongs to the metallo-dependent hydrolases superfamily. ACMSD family. As to quaternary structure, monomer.

The protein resides in the cytoplasm. It localises to the cytosol. It catalyses the reaction 6-methylsalicylate + H(+) = 3-methylphenol + CO2. Its pathway is mycotoxin biosynthesis; patulin biosynthesis. 6-methylsalicylic acid decarboxylase; part of the gene cluster that mediates the biosynthesis of patulin, an acetate-derived tetraketide mycotoxin produced by several fungal species that shows antimicrobial properties against several bacteria. PatG catalyzes the decarboxylation of 6-methylsalicylic acid to yield m-cresol. The pathway begins with the synthesis of 6-methylsalicylic acid by the polyketide synthase (PKS) patK via condensation of acetate and malonate units. The 6-methylsalicylic acid decarboxylase patG then catalyzes the decarboxylation of 6-methylsalicylic acid to yield m-cresol (also known as 3-methylphenol). These first reactions occur in the cytosol. The intermediate m-cresol is then transported into the endoplasmic reticulum where the cytochrome P450 monooxygenase patH converts it to m-hydroxybenzyl alcohol, which is further converted to gentisyl alcohol by the cytochrome P450 monooxygenase patI. The oxidoreductases patJ and patO further convert gentisyl alcohol to isoepoxydon in the vacuole. PatN catalyzes then the transformation of isoepoxydon into phyllostine. The cluster protein patF is responsible for the conversion from phyllostine to neopatulin whereas the alcohol dehydrogenase patD converts neopatulin to E-ascladiol. The steps between isoepoxydon and E-ascladiol occur in the cytosol, and E-ascladiol is probably secreted to the extracellular space by one of the cluster-specific transporters patC or patM. Finally, the secreted patulin synthase patE catalyzes the conversion of E-ascladiol to patulin. This chain is 6-methylsalicylic acid decarboxylase, found in Penicillium expansum (Blue mold rot fungus).